Here is a 532-residue protein sequence, read N- to C-terminus: T-complex protein 1 subunit beta (532 aa).

It belongs to the TCP-1 chaperonin family. Heterooligomeric complex of about 850 to 900 kDa that forms two stacked rings, 12 to 16 nm in diameter.

Its subcellular location is the cytoplasm. Functionally, molecular chaperone; assists the folding of proteins upon ATP hydrolysis. Known to play a role, in vitro, in the folding of actin and tubulin. In Dictyostelium discoideum (Social amoeba), this protein is T-complex protein 1 subunit beta (cct2).